Here is a 454-residue protein sequence, read N- to C-terminus: Dihydrolipoyllysine-residue succinyltransferase component of 2-oxoglutarate dehydrogenase complex, mitochondrial (454 aa).

The transit peptide at 1–68 directs the protein to the mitochondrion; it reads MLSRSRCVSR…RFFQTTAVCK (68 aa). The Lipoyl-binding domain occupies 71 to 145; it reads VITVQTPAFA…EGGTPLFTLR (75 aa). The residue at position 82 (serine 82) is a Phosphoserine. Lysine 111 carries the N6-lipoyllysine modification. The tract at residues 147–227 is disordered; sequence TGAAPAKAKP…KGLRSEHREK (81 aa). The span at 149–163 shows a compositional bias: low complexity; it reads AAPAKAKPAETPAPA. At lysine 155 the chain carries N6-acetyllysine. Pro residues predominate over residues 186–197; it reads PPVPSPSQPPSS. The segment covering 198–217 has biased composition (low complexity); it reads KPVSAIKPTAAPPLAEAGAA. N6-acetyllysine occurs at positions 268, 273, 274, 278, and 308. Catalysis depends on residues histidine 425 and aspartate 429.

The protein belongs to the 2-oxoacid dehydrogenase family. As to quaternary structure, the 2-oxoglutarate dehydrogenase complex is composed of OGDH (2-oxoglutarate dehydrogenase; E1), DLST (dihydrolipoamide succinyltransferase; E2), DLD (dihydrolipoamide dehydrogenase; E3) and the assembly factor KGD4. It contains multiple copies of the three enzymatic components (E1, E2 and E3). In the nucleus, the 2-oxoglutarate dehydrogenase complex associates with KAT2A. Interacts with ABHD11; this interaction maintains the functional lipoylation of the 2-oxoglutarate dehydrogenase complex. (R)-lipoate serves as cofactor.

It is found in the mitochondrion matrix. The protein localises to the nucleus. It catalyses the reaction N(6)-[(R)-dihydrolipoyl]-L-lysyl-[protein] + succinyl-CoA = N(6)-[(R)-S(8)-succinyldihydrolipoyl]-L-lysyl-[protein] + CoA. It participates in amino-acid degradation; L-lysine degradation via saccharopine pathway; glutaryl-CoA from L-lysine: step 6/6. Its pathway is carbohydrate metabolism; tricarboxylic acid cycle. Dihydrolipoamide succinyltransferase (E2) component of the 2-oxoglutarate dehydrogenase complex. The 2-oxoglutarate dehydrogenase complex catalyzes the overall conversion of 2-oxoglutarate to succinyl-CoA and CO(2). The 2-oxoglutarate dehydrogenase complex is mainly active in the mitochondrion. A fraction of the 2-oxoglutarate dehydrogenase complex also localizes in the nucleus and is required for lysine succinylation of histones: associates with KAT2A on chromatin and provides succinyl-CoA to histone succinyltransferase KAT2A. In Mus musculus (Mouse), this protein is Dihydrolipoyllysine-residue succinyltransferase component of 2-oxoglutarate dehydrogenase complex, mitochondrial.